The primary structure comprises 331 residues: Elongation factor Ts, mitochondrial (331 aa).

Residues 1 to 14 constitute a mitochondrion transit peptide; it reads MIVSRQVIRSVVRK.

This sequence belongs to the EF-Ts family.

It is found in the mitochondrion. Functionally, associates with the EF-Tu.GDP complex and induces the exchange of GDP to GTP. It remains bound to the aminoacyl-tRNA.EF-Tu.GTP complex up to the GTP hydrolysis stage on the ribosome. The protein is Elongation factor Ts, mitochondrial of Brugia malayi (Filarial nematode worm).